Here is a 267-residue protein sequence, read N- to C-terminus: MKQSKKLGQCFLKDKNFVKKAIKSADITENDIVLEVGLGEGALTKELAKLAKFVYVIELDMRLEPFANQIMSEFKNVKVIWNDALKVDLKELGFNKIVANLPYQISSPITFKFLENDFDVAVLMYQYEFAKRMIGKPDTDEYSRLSVSIQYNSDVEFICKVPPTAFSPKPDVNSAIVKLTKREPLFHIENEEFFRNVLNAIFQHRNRTVKRALIDSSHEMNIERERLKEILENIKLDFDFSERVFKLAPEKIGELSNILYLNIISKK.

Residues leucine 12, glycine 37, glutamate 58, aspartate 83, and asparagine 100 each contribute to the S-adenosyl-L-methionine site.

The protein belongs to the class I-like SAM-binding methyltransferase superfamily. rRNA adenine N(6)-methyltransferase family. RsmA subfamily.

It is found in the cytoplasm. Its function is as follows. Specifically dimethylates two adjacent adenosines in the loop of a conserved hairpin near the 3'-end of 16S rRNA in the 30S particle. May play a critical role in biogenesis of 30S subunits. The polypeptide is Probable ribosomal RNA small subunit methyltransferase A (Methanococcus vannielii (strain ATCC 35089 / DSM 1224 / JCM 13029 / OCM 148 / SB)).